A 207-amino-acid polypeptide reads, in one-letter code: Ras-related protein Rab7 (207 aa).

Residues 15-22 (GDSGVGKT), 63-67 (DTAGQ), and 125-128 (NKID) contribute to the GTP site. 2 S-geranylgeranyl cysteine lipidation sites follow: Cys205 and Cys207. The residue at position 207 (Cys207) is a Cysteine methyl ester.

It belongs to the small GTPase superfamily. Rab family.

Its subcellular location is the cell membrane. Protein transport. Probably involved in vesicular traffic. The polypeptide is Ras-related protein Rab7 (Prunus armeniaca (Apricot)).